The chain runs to 149 residues: Thiosulfate sulfurtransferase RDL2, mitochondrial (149 aa).

The transit peptide at 1–25 directs the protein to the mitochondrion; the sequence is MFKHSTGILSRTVSARSPTLVLRTF. The region spanning 45-146 is the Rhodanese domain; that stretch reads PNDKKLLVDV…WLAKGGADVK (102 aa). The active-site Cysteine persulfide intermediate is Cys106.

Its subcellular location is the mitochondrion. It carries out the reaction thiosulfate + hydrogen cyanide = thiocyanate + sulfite + 2 H(+). Its function is as follows. Thiosulfate sulfurtransferase which catalyzes the transfer of sulfane sulfur from thiosulfate to cyanide. This is Thiosulfate sulfurtransferase RDL2, mitochondrial (RDL2) from Saccharomyces cerevisiae (strain ATCC 204508 / S288c) (Baker's yeast).